Reading from the N-terminus, the 225-residue chain is NAD(P)H-quinone oxidoreductase subunit K, chloroplastic (225 aa).

Cys-43, Cys-44, Cys-108, and Cys-139 together coordinate [4Fe-4S] cluster.

It belongs to the complex I 20 kDa subunit family. As to quaternary structure, NDH is composed of at least 16 different subunits, 5 of which are encoded in the nucleus. Requires [4Fe-4S] cluster as cofactor.

It is found in the plastid. Its subcellular location is the chloroplast thylakoid membrane. It catalyses the reaction a plastoquinone + NADH + (n+1) H(+)(in) = a plastoquinol + NAD(+) + n H(+)(out). It carries out the reaction a plastoquinone + NADPH + (n+1) H(+)(in) = a plastoquinol + NADP(+) + n H(+)(out). Functionally, NDH shuttles electrons from NAD(P)H:plastoquinone, via FMN and iron-sulfur (Fe-S) centers, to quinones in the photosynthetic chain and possibly in a chloroplast respiratory chain. The immediate electron acceptor for the enzyme in this species is believed to be plastoquinone. Couples the redox reaction to proton translocation, and thus conserves the redox energy in a proton gradient. The polypeptide is NAD(P)H-quinone oxidoreductase subunit K, chloroplastic (Fagopyrum esculentum subsp. ancestrale (Wild buckwheat)).